Here is a 166-residue protein sequence, read N- to C-terminus: Regulatory protein RecX (166 aa).

This sequence belongs to the RecX family.

The protein localises to the cytoplasm. Modulates RecA activity. The protein is Regulatory protein RecX of Escherichia coli O139:H28 (strain E24377A / ETEC).